A 402-amino-acid chain; its full sequence is CCA-adding enzyme (402 aa).

Positions 32 and 35 each coordinate ATP. Gly32 and Arg35 together coordinate CTP. The Mg(2+) site is built by Asp45 and Asp47. Residues Arg116, Asp159, Arg162, Arg165, and Arg168 each contribute to the ATP site. CTP-binding residues include Arg116, Asp159, Arg162, Arg165, and Arg168.

It belongs to the tRNA nucleotidyltransferase/poly(A) polymerase family. Bacterial CCA-adding enzyme type 3 subfamily. Homodimer. Mg(2+) serves as cofactor.

It catalyses the reaction a tRNA precursor + 2 CTP + ATP = a tRNA with a 3' CCA end + 3 diphosphate. It carries out the reaction a tRNA with a 3' CCA end + 2 CTP + ATP = a tRNA with a 3' CCACCA end + 3 diphosphate. Catalyzes the addition and repair of the essential 3'-terminal CCA sequence in tRNAs without using a nucleic acid template. Adds these three nucleotides in the order of C, C, and A to the tRNA nucleotide-73, using CTP and ATP as substrates and producing inorganic pyrophosphate. tRNA 3'-terminal CCA addition is required both for tRNA processing and repair. Also involved in tRNA surveillance by mediating tandem CCA addition to generate a CCACCA at the 3' terminus of unstable tRNAs. While stable tRNAs receive only 3'-terminal CCA, unstable tRNAs are marked with CCACCA and rapidly degraded. The chain is CCA-adding enzyme from Streptococcus pyogenes serotype M4 (strain MGAS10750).